A 309-amino-acid polypeptide reads, in one-letter code: Ribosomal RNA small subunit methyltransferase H (309 aa).

S-adenosyl-L-methionine contacts are provided by residues 33-35 (GGH), Asp-53, Phe-79, Asp-100, and Gln-107.

The protein belongs to the methyltransferase superfamily. RsmH family.

It localises to the cytoplasm. It catalyses the reaction cytidine(1402) in 16S rRNA + S-adenosyl-L-methionine = N(4)-methylcytidine(1402) in 16S rRNA + S-adenosyl-L-homocysteine + H(+). Its function is as follows. Specifically methylates the N4 position of cytidine in position 1402 (C1402) of 16S rRNA. This is Ribosomal RNA small subunit methyltransferase H from Clostridium kluyveri (strain NBRC 12016).